We begin with the raw amino-acid sequence, 249 residues long: ATP synthase subunit a, chloroplastic (249 aa).

5 consecutive transmembrane segments (helical) span residues 40-60 (QVLI…VLAI), 97-117 (VPFI…GALL), 136-156 (INTT…AGLS), 201-221 (LVVV…VMFL), and 222-242 (GLFT…AYIG).

This sequence belongs to the ATPase A chain family. As to quaternary structure, F-type ATPases have 2 components, CF(1) - the catalytic core - and CF(0) - the membrane proton channel. CF(1) has five subunits: alpha(3), beta(3), gamma(1), delta(1), epsilon(1). CF(0) has four main subunits: a, b, b' and c.

The protein resides in the plastid. It localises to the chloroplast thylakoid membrane. Key component of the proton channel; it plays a direct role in the translocation of protons across the membrane. The protein is ATP synthase subunit a, chloroplastic of Nasturtium officinale (Watercress).